Here is a 196-residue protein sequence, read N- to C-terminus: Orotate phosphoribosyltransferase (196 aa).

Residues Arg-102, Lys-103, Lys-106, His-108, and Glu-129 to Ser-137 each bind 5-phospho-alpha-D-ribose 1-diphosphate. Positions 133 and 161 each coordinate orotate.

Belongs to the purine/pyrimidine phosphoribosyltransferase family. PyrE subfamily. As to quaternary structure, homodimer. Mg(2+) is required as a cofactor.

It catalyses the reaction orotidine 5'-phosphate + diphosphate = orotate + 5-phospho-alpha-D-ribose 1-diphosphate. Its pathway is pyrimidine metabolism; UMP biosynthesis via de novo pathway; UMP from orotate: step 1/2. Its function is as follows. Catalyzes the transfer of a ribosyl phosphate group from 5-phosphoribose 1-diphosphate to orotate, leading to the formation of orotidine monophosphate (OMP). The polypeptide is Orotate phosphoribosyltransferase (Prochlorococcus marinus (strain MIT 9303)).